Here is a 344-residue protein sequence, read N- to C-terminus: Exopolyphosphatase 1 (344 aa).

Positions 319–344 are disordered; sequence VHTSVRAVGGQPADRNAANRSRGSKP.

Belongs to the GppA/Ppx family. As to quaternary structure, homodimer.

The catalysed reaction is [phosphate](n) + H2O = [phosphate](n-1) + phosphate + H(+). Functionally, degradation of inorganic polyphosphates (polyP). Releases orthophosphate processively from the ends of the polyP chain. The protein is Exopolyphosphatase 1 of Mycobacterium bovis (strain ATCC BAA-935 / AF2122/97).